Consider the following 397-residue polypeptide: Ubiquitin-like modifier-activating enzyme 5 (397 aa).

ATP is bound by residues G76, D97, K120, N143, and N177. Residues C219 and C222 each contribute to the Zn(2+) site. The active-site Glycyl thioester intermediate is C243. C296 and C301 together coordinate Zn(2+). Residues 362 to 384 (LAYEPPASTKHSETTSTTAVSDD) are disordered. Over residues 375–384 (TTSTTAVSDD) the composition is skewed to low complexity.

The protein belongs to the ubiquitin-activating E1 family. UBA5 subfamily.

In terms of biological role, E1-like enzyme which activates UFM1. This is Ubiquitin-like modifier-activating enzyme 5 from Aedes aegypti (Yellowfever mosquito).